The sequence spans 583 residues: CTP synthase (583 aa).

The segment at 1–278 is amidoligase domain; that stretch reads MRRHPQTATK…DAFVVRRLNL (278 aa). Residue Ser-20 participates in CTP binding. Residue Ser-20 coordinates UTP. ATP-binding positions include 21-26 and Asp-78; that span reads SLGKGL. The Mg(2+) site is built by Asp-78 and Glu-152. CTP contacts are provided by residues 159–161, 199–204, and Lys-235; these read DIE and KTKPTQ. UTP is bound by residues 199 to 204 and Lys-235; that span reads KTKPTQ. In terms of domain architecture, Glutamine amidotransferase type-1 spans 303–551; that stretch reads RIALVGKYVE…VKAAIDYKEG (249 aa). Residue Gly-366 coordinates L-glutamine. Cys-393 (nucleophile; for glutamine hydrolysis) is an active-site residue. L-glutamine contacts are provided by residues 394–397, Glu-416, and Arg-477; that span reads LGLQ. Catalysis depends on residues His-524 and Glu-526. Residues 559 to 583 are disordered; it reads PERVSNGAERRDQVGQSIPEPANRG.

It belongs to the CTP synthase family. In terms of assembly, homotetramer.

It carries out the reaction UTP + L-glutamine + ATP + H2O = CTP + L-glutamate + ADP + phosphate + 2 H(+). The catalysed reaction is L-glutamine + H2O = L-glutamate + NH4(+). It catalyses the reaction UTP + NH4(+) + ATP = CTP + ADP + phosphate + 2 H(+). It functions in the pathway pyrimidine metabolism; CTP biosynthesis via de novo pathway; CTP from UDP: step 2/2. Allosterically activated by GTP, when glutamine is the substrate; GTP has no effect on the reaction when ammonia is the substrate. The allosteric effector GTP functions by stabilizing the protein conformation that binds the tetrahedral intermediate(s) formed during glutamine hydrolysis. Inhibited by the product CTP, via allosteric rather than competitive inhibition. Catalyzes the ATP-dependent amination of UTP to CTP with either L-glutamine or ammonia as the source of nitrogen. Regulates intracellular CTP levels through interactions with the four ribonucleotide triphosphates. In Mycobacterium marinum (strain ATCC BAA-535 / M), this protein is CTP synthase.